The chain runs to 198 residues: Superoxide dismutase [Fe] (198 aa).

Residues histidine 27, histidine 74, aspartate 157, and histidine 161 each coordinate Fe(3+).

This sequence belongs to the iron/manganese superoxide dismutase family. As to quaternary structure, homodimer. The cofactor is Fe(3+).

It catalyses the reaction 2 superoxide + 2 H(+) = H2O2 + O2. Its function is as follows. Destroys superoxide anion radicals which are normally produced within the cells and which are toxic to biological systems. In Pseudomonas putida (Arthrobacter siderocapsulatus), this protein is Superoxide dismutase [Fe] (sodB).